The sequence spans 168 residues: Photosystem I assembly protein Ycf3 (168 aa).

3 TPR repeats span residues 35-68 (AFTY…EIDP), 72-105 (SYIL…NPFL), and 120-153 (GEQA…TPGN).

Belongs to the Ycf3 family.

The protein localises to the plastid. Its subcellular location is the chloroplast thylakoid membrane. In terms of biological role, essential for the assembly of the photosystem I (PSI) complex. May act as a chaperone-like factor to guide the assembly of the PSI subunits. The polypeptide is Photosystem I assembly protein Ycf3 (Acorus calamus var. americanus (American sweet flag)).